The chain runs to 212 residues: Large ribosomal subunit protein bL25 (212 aa).

The tract at residues 183-212 (HDLPVASIHKPKGAKADDAEGEEGEEGGEE) is disordered. The segment covering 201–212 (AEGEEGEEGGEE) has biased composition (acidic residues).

It belongs to the bacterial ribosomal protein bL25 family. CTC subfamily. In terms of assembly, part of the 50S ribosomal subunit; part of the 5S rRNA/L5/L18/L25 subcomplex. Contacts the 5S rRNA. Binds to the 5S rRNA independently of L5 and L18.

In terms of biological role, this is one of the proteins that binds to the 5S RNA in the ribosome where it forms part of the central protuberance. This Marinobacter nauticus (strain ATCC 700491 / DSM 11845 / VT8) (Marinobacter aquaeolei) protein is Large ribosomal subunit protein bL25.